Reading from the N-terminus, the 601-residue chain is MAKQSNIRNFSIIAHIDHGKSTLADRILDVTGLVTERDKRDQYLDRMELERERGITIKAQAVRIPYKAADGREYVLNLIDTPGHVDFSYEVSRSLAACEGALLVVDATQGVEAQTLANVFLALDHDHEIIPVLNKIDLPSSDIARVKAEIEDGIGLDAAEAVEVSAKTGLNVDKVLEAIVERLPAPEGDSDAPLQALIFDSWYDSYQGVVVMFRVMHGTIRKGDSIQMMATGKKYEVTRLGVFSPEAKDVDCFTAGDVGFLCAAIKELGDAKVGDTVTHSSRPAATPLPGFKEVKPMVFCGLYPTDSSEYEQLKYALEKLQLNDAAFSFEAETSQALGFGYRCGFLGLLHMEIVQERLEREFNIGLIATAPSVVYKVLTVDGEEKYIENPAALPDPTKIEGLYEPYVRMEIHVPNEFVGNVFKLCEEKRGIQKDMRYLAVNRVIITYELPFAEIVYDFFDKLKSLTRGYASMDYEIIDYRQSNLVKLDMLINGDPVDALACIVHRDKAYYQGRAIALRLKRTIPRQMFEVVVQAAIGNKIIARERNAPLRKNVTAKCYGGDITRKRKLLEKQKEGKKRMKRMGNVELPQEAFLAALQVDDE.

One can recognise a tr-type G domain in the interval serine 5 to glutamate 187. GTP-binding positions include aspartate 17 to threonine 22 and asparagine 134 to aspartate 137.

It belongs to the TRAFAC class translation factor GTPase superfamily. Classic translation factor GTPase family. LepA subfamily.

It is found in the cell inner membrane. It catalyses the reaction GTP + H2O = GDP + phosphate + H(+). Required for accurate and efficient protein synthesis under certain stress conditions. May act as a fidelity factor of the translation reaction, by catalyzing a one-codon backward translocation of tRNAs on improperly translocated ribosomes. Back-translocation proceeds from a post-translocation (POST) complex to a pre-translocation (PRE) complex, thus giving elongation factor G a second chance to translocate the tRNAs correctly. Binds to ribosomes in a GTP-dependent manner. The sequence is that of Elongation factor 4 from Oleidesulfovibrio alaskensis (strain ATCC BAA-1058 / DSM 17464 / G20) (Desulfovibrio alaskensis).